Here is a 684-residue protein sequence, read N- to C-terminus: Extracellular lipase (684 aa).

The first 48 residues, 1 to 48 (MKKKLIYAAVVSALLAGCGGSDDNKGDTSSYLDYLLTGSNAVGPSALA), serve as a signal peptide directing secretion. Disordered stretches follow at residues 321–405 (SIPV…ADWG) and 462–493 (QRER…GDRS). The span at 385–405 (ADCRSDPPERAAGRGEQADWG) shows a compositional bias: basic and acidic residues. Ser568 serves as the catalytic Nucleophile.

The protein belongs to the AB hydrolase superfamily. Lipase family. Monomer.

It localises to the secreted. It carries out the reaction a triacylglycerol + H2O = a diacylglycerol + a fatty acid + H(+). Functionally, the optimum chain lengths for the acyl moiety is C6 for ester hydrolysis and C6 and C8 for triacylglycerol hydrolysis. In Aeromonas hydrophila, this protein is Extracellular lipase.